Consider the following 197-residue polypeptide: Large ribosomal subunit protein bL25 (197 aa).

It belongs to the bacterial ribosomal protein bL25 family. CTC subfamily. As to quaternary structure, part of the 50S ribosomal subunit; part of the 5S rRNA/L5/L18/L25 subcomplex. Contacts the 5S rRNA. Binds to the 5S rRNA independently of L5 and L18.

Functionally, this is one of the proteins that binds to the 5S RNA in the ribosome where it forms part of the central protuberance. This Pseudomonas putida (strain GB-1) protein is Large ribosomal subunit protein bL25.